Consider the following 341-residue polypeptide: Binder of USO1 and GRH1 protein 1 (341 aa).

Residues 1–181 form a disordered region; it reads MSEQESDEVK…AADDLFANDG (181 aa). The residue at position 2 (serine 2) is an N-acetylserine. Residues 2–41 adopt a coiled-coil conformation; that stretch reads SEQESDEVKRMKQLEEARKRVEELKKKKNKKNKGKKNKNS. The span at 7-26 shows a compositional bias: basic and acidic residues; it reads DEVKRMKQLEEARKRVEELK. Basic residues predominate over residues 27-39; the sequence is KKKNKKNKGKKNK. Over residues 69–78 the composition is skewed to polar residues; it reads KANSTKSENN. A compositionally biased stretch (acidic residues) spans 79-91; it reads DQNDVDEESEEKE. At serine 87 the chain carries Phosphoserine. The segment covering 118–132 has biased composition (basic and acidic residues); it reads GKDDAENTKKEEVQE. Residues 158–171 show a composition bias toward polar residues; it reads VQTQEGNEPSNTSE. Position 170 is a phosphoserine (serine 170). A coiled-coil region spans residues 188 to 272; it reads LTTIKKQKEE…LKLAEAKAAR (85 aa). Threonine 292 bears the Phosphothreonine mark.

Interacts with GRH1 (via C-terminus), probably forming a heterooligomer consisting of a GRH1 dimer and a BUG1 dimer.

It is found in the cytoplasm. The protein resides in the golgi apparatus. Its subcellular location is the cis-Golgi network membrane. Its function is as follows. Involved in ER to Golgi vesicle-mediated transport by either facilitating USO1-dependent and -independent tethering or increasing target accuracy of fusion events of COPII-coated vesicles. The polypeptide is Binder of USO1 and GRH1 protein 1 (Saccharomyces cerevisiae (strain ATCC 204508 / S288c) (Baker's yeast)).